The sequence spans 787 residues: Protein translocase subunit SecA (787 aa).

Residues Gln-85, 103–107, and Asp-492 each bind ATP; that span reads GEGKT.

This sequence belongs to the SecA family. Monomer and homodimer. Part of the essential Sec protein translocation apparatus which comprises SecA, SecYEG and auxiliary proteins SecDF. Other proteins may also be involved.

It localises to the cell membrane. The protein resides in the cytoplasm. The enzyme catalyses ATP + H2O + cellular proteinSide 1 = ADP + phosphate + cellular proteinSide 2.. Part of the Sec protein translocase complex. Interacts with the SecYEG preprotein conducting channel. Has a central role in coupling the hydrolysis of ATP to the transfer of proteins into and across the cell membrane, serving as an ATP-driven molecular motor driving the stepwise translocation of polypeptide chains across the membrane. In Lactiplantibacillus plantarum (strain ATCC BAA-793 / NCIMB 8826 / WCFS1) (Lactobacillus plantarum), this protein is Protein translocase subunit SecA.